Here is a 132-residue protein sequence, read N- to C-terminus: uncharacterized protein (132 aa).

Residues 68 to 91 (WSRTSPNSSRSSPRSPASMASTSS) are disordered.

This is an uncharacterized protein from Streptomyces cacaoi.